We begin with the raw amino-acid sequence, 495 residues long: Probable aminotransferase ACS12 (495 aa).

An N6-(pyridoxal phosphate)lysine modification is found at Lys334.

This sequence belongs to the class-I pyridoxal-phosphate-dependent aminotransferase family. As to quaternary structure, homodimer. The cofactor is pyridoxal 5'-phosphate. As to expression, expressed in roots. Expressed at low level in leaves, stems, flowers and siliques.

Functionally, probable aminotransferase. Does not have 1-aminocyclopropane-1-carboxylate synthase (ACS) activity, suggesting that it is not involved in ethylene biosynthesis. The chain is Probable aminotransferase ACS12 (ACS12) from Arabidopsis thaliana (Mouse-ear cress).